The sequence spans 198 residues: FMN-dependent NADH:quinone oxidoreductase (198 aa).

92–95 is a binding site for FMN; it reads MWNL.

This sequence belongs to the azoreductase type 1 family. As to quaternary structure, homodimer. FMN serves as cofactor.

The enzyme catalyses 2 a quinone + NADH + H(+) = 2 a 1,4-benzosemiquinone + NAD(+). It carries out the reaction N,N-dimethyl-1,4-phenylenediamine + anthranilate + 2 NAD(+) = 2-(4-dimethylaminophenyl)diazenylbenzoate + 2 NADH + 2 H(+). Functionally, quinone reductase that provides resistance to thiol-specific stress caused by electrophilic quinones. In terms of biological role, also exhibits azoreductase activity. Catalyzes the reductive cleavage of the azo bond in aromatic azo compounds to the corresponding amines. The sequence is that of FMN-dependent NADH:quinone oxidoreductase from Lachnoclostridium phytofermentans (strain ATCC 700394 / DSM 18823 / ISDg) (Clostridium phytofermentans).